A 77-amino-acid chain; its full sequence is U9-lycotoxin-Ls1a (77 aa).

A signal peptide spans 1 to 20; that stretch reads MKLLLFTALVLVVIVSLIEA. A propeptide spanning residues 21–26 is cleaved from the precursor; it reads EAENER.

It belongs to the neurotoxin 19 (CSTX) family. 08 (U8-Lctx) subfamily. In terms of processing, contains 4 disulfide bonds. Expressed by the venom gland.

The protein localises to the secreted. The polypeptide is U9-lycotoxin-Ls1a (Lycosa singoriensis (Wolf spider)).